Here is a 652-residue protein sequence, read N- to C-terminus: ATP-dependent zinc metalloprotease FtsH (652 aa).

Residues 1-11 are Cytoplasmic-facing; it reads MKKQNNGLIKN. The helical transmembrane segment at 12-32 threads the bilayer; sequence PFLWLLFIFFLVTGFQYFYSG. At 33-131 the chain is on the extracellular side; that stretch reads NNSGGSQQIN…EVTVKHESSS (99 aa). The helical transmembrane segment at 132–152 threads the bilayer; it reads GIWINLLVSIVPFGILFFFLF. At 153–652 the chain is on the cytoplasmic side; the sequence is SMMGNMGGGN…EVKSKMNDEK (500 aa). Position 227 to 234 (227 to 234) interacts with ATP; that stretch reads GPPGTGKT. A Zn(2+)-binding site is contributed by histidine 449. The active site involves glutamate 450. Residues histidine 453 and aspartate 525 each contribute to the Zn(2+) site. Residues 628–652 form a disordered region; it reads MPEAVEEESHALSYDEVKSKMNDEK. Basic and acidic residues predominate over residues 634–652; the sequence is EESHALSYDEVKSKMNDEK.

It in the central section; belongs to the AAA ATPase family. In the C-terminal section; belongs to the peptidase M41 family. In terms of assembly, homohexamer. Zn(2+) serves as cofactor.

It is found in the cell membrane. Functionally, acts as a processive, ATP-dependent zinc metallopeptidase for both cytoplasmic and membrane proteins. Plays a role in the quality control of integral membrane proteins. This Streptococcus pneumoniae serotype 4 (strain ATCC BAA-334 / TIGR4) protein is ATP-dependent zinc metalloprotease FtsH.